An 864-amino-acid polypeptide reads, in one-letter code: Calphotin (864 aa).

The tract at residues Leu816–Leu858 is leucine-zipper.

In terms of assembly, homodimer. In terms of tissue distribution, soma and axons of photoreceptor cells of compound eyes and ocelli.

The protein localises to the cytoplasm. Plays important roles in both rhabdomere development and in photoreceptor cell survival. Might function as a calcium-sequestering 'sponge' to regulate the amount of free cytoplasmic calcium. It binds 0.3 mole of Ca(2+) per mole of protein. The protein is Calphotin (Cpn) of Drosophila melanogaster (Fruit fly).